An 874-amino-acid polypeptide reads, in one-letter code: MKVSDIRSKFLQFFESKGHTVVRSSSLVPANDPTLLFTNSGMVQFKDVFLGTDKRPYVRATSSQRSVRAGGKHNDLENVGYTARHHTFFEMLGNFSFGDYFKREAIQYAWELLTKVYQLPADKLWVTVYAEDDEAYDIWAKEVGVPADRIVRIGDNKGARYASDNFWQMADTGPCGPCSEIFYDHGPDVWGGPPGSPEEDGDRYIEIWNLVFMQFNRDEQGTMTPLPKPCVDTGMGLERIAAVLQHVHSNYEIDLFQALIKGAGRETHIADLNQNSLKVIADHIRACSFLIVDGVIPGNEGRGYVLRRIVRRAIRHGYKLGQKTPFFHKLVGDLVAQMGEAYPELAEAQSRVVEVLKAEEERFFETIENGMSILDAAVADLKAKGGKVLDGELAFKLHDTFGFPLDLTQDVAREQEITVDEAAFDAAMTRQREQARAAGKFKMAAGLEYSGEKTVFHGYDALSMDGVRVTALYVDGASVDTMQPGQSGVVVLDNTPFYAESGGQVGDQGTLVSGPAVFAVADTTKIQSDVFGHQGTLANGALKVGDTVAAQVDAVRRARTVRNHSATHLMHKALREVLGTHVQQKGSLVDPDKTRFDFSHNAPLTDAQIRQIEEIVNAEILSNAPTVAQVMPFDDAVKSGAMALFGEKYADDVRVLSIGTSKELCGGTHVTRTGDIGLFKIVVEAGVAAGIRRVEAITGDNALHYLQSLDARLNEAAAALRAQPSELVPRIGQVQDQVRALEKELEKLKSKLASSQGDELAAQAVDVKGLKVLAAQLDGADVKTLRETMDKLKDKLQSAAIVLAAVADGKVSLIAGVTADATSKVKAGELVNFVAQQVGGKGGGRPDMAQAGGTDPANLPKALAGVTEWVSAKV.

Residues H564, H568, C665, and H669 each coordinate Zn(2+).

This sequence belongs to the class-II aminoacyl-tRNA synthetase family. Zn(2+) is required as a cofactor.

It is found in the cytoplasm. The catalysed reaction is tRNA(Ala) + L-alanine + ATP = L-alanyl-tRNA(Ala) + AMP + diphosphate. Its function is as follows. Catalyzes the attachment of alanine to tRNA(Ala) in a two-step reaction: alanine is first activated by ATP to form Ala-AMP and then transferred to the acceptor end of tRNA(Ala). Also edits incorrectly charged Ser-tRNA(Ala) and Gly-tRNA(Ala) via its editing domain. The polypeptide is Alanine--tRNA ligase (Cupriavidus metallidurans (strain ATCC 43123 / DSM 2839 / NBRC 102507 / CH34) (Ralstonia metallidurans)).